Reading from the N-terminus, the 339-residue chain is UDP-N-acetylglucosamine--N-acetylmuramyl-(pentapeptide) pyrophosphoryl-undecaprenol N-acetylglucosamine transferase (339 aa).

Residues 11 to 13, Asn127, Arg170, Ser188, Ile235, and Gln280 each bind UDP-N-acetyl-alpha-D-glucosamine; that span reads TGG.

It belongs to the glycosyltransferase 28 family. MurG subfamily.

The protein localises to the cell inner membrane. It catalyses the reaction di-trans,octa-cis-undecaprenyl diphospho-N-acetyl-alpha-D-muramoyl-L-alanyl-D-glutamyl-meso-2,6-diaminopimeloyl-D-alanyl-D-alanine + UDP-N-acetyl-alpha-D-glucosamine = di-trans,octa-cis-undecaprenyl diphospho-[N-acetyl-alpha-D-glucosaminyl-(1-&gt;4)]-N-acetyl-alpha-D-muramoyl-L-alanyl-D-glutamyl-meso-2,6-diaminopimeloyl-D-alanyl-D-alanine + UDP + H(+). Its pathway is cell wall biogenesis; peptidoglycan biosynthesis. In terms of biological role, cell wall formation. Catalyzes the transfer of a GlcNAc subunit on undecaprenyl-pyrophosphoryl-MurNAc-pentapeptide (lipid intermediate I) to form undecaprenyl-pyrophosphoryl-MurNAc-(pentapeptide)GlcNAc (lipid intermediate II). This Thermotoga petrophila (strain ATCC BAA-488 / DSM 13995 / JCM 10881 / RKU-1) protein is UDP-N-acetylglucosamine--N-acetylmuramyl-(pentapeptide) pyrophosphoryl-undecaprenol N-acetylglucosamine transferase.